A 162-amino-acid chain; its full sequence is uncharacterized protein (162 aa).

The segment at 1 to 23 is disordered; sequence MAQLPLSPAPQRPETKTPGKPEA. The span at 13–23 shows a compositional bias: basic and acidic residues; it reads PETKTPGKPEA.

This is an uncharacterized protein from Rhodobacter capsulatus (Rhodopseudomonas capsulata).